The primary structure comprises 140 residues: Acyl carrier protein 1, chloroplastic (140 aa).

The transit peptide at methionine 1–cysteine 56 directs the protein to the chloroplast. The 76-residue stretch at proline 60–methionine 135 folds into the Carrier domain. The residue at position 95 (serine 95) is an O-(pantetheine 4'-phosphoryl)serine.

The protein belongs to the acyl carrier protein (ACP) family. In terms of processing, 4'-phosphopantetheine is transferred from CoA to a specific serine of apo-ACP by acpS. This modification is essential for activity because fatty acids are bound in thioester linkage to the sulfhydryl of the prosthetic group.

It is found in the plastid. Its subcellular location is the chloroplast. It functions in the pathway lipid metabolism; fatty acid biosynthesis. In terms of biological role, carrier of the growing fatty acid chain in fatty acid biosynthesis. This Cuphea lanceolata (Cigar flower) protein is Acyl carrier protein 1, chloroplastic (ACL1.1).